We begin with the raw amino-acid sequence, 477 residues long: Bifunctional protein HldE (477 aa).

The segment at 1–318 is ribokinase; sequence MKVNLPAFER…ENAVRGRADT (318 aa). Residue 195–198 participates in ATP binding; it reads NLSE. D264 is an active-site residue. The cytidylyltransferase stretch occupies residues 344-477; that stretch reads MTNGVFDILH…IKKIQTESEK (134 aa).

This sequence in the N-terminal section; belongs to the carbohydrate kinase PfkB family. The protein in the C-terminal section; belongs to the cytidylyltransferase family. Homodimer.

The catalysed reaction is D-glycero-beta-D-manno-heptose 7-phosphate + ATP = D-glycero-beta-D-manno-heptose 1,7-bisphosphate + ADP + H(+). It carries out the reaction D-glycero-beta-D-manno-heptose 1-phosphate + ATP + H(+) = ADP-D-glycero-beta-D-manno-heptose + diphosphate. The protein operates within nucleotide-sugar biosynthesis; ADP-L-glycero-beta-D-manno-heptose biosynthesis; ADP-L-glycero-beta-D-manno-heptose from D-glycero-beta-D-manno-heptose 7-phosphate: step 1/4. Its pathway is nucleotide-sugar biosynthesis; ADP-L-glycero-beta-D-manno-heptose biosynthesis; ADP-L-glycero-beta-D-manno-heptose from D-glycero-beta-D-manno-heptose 7-phosphate: step 3/4. Catalyzes the phosphorylation of D-glycero-D-manno-heptose 7-phosphate at the C-1 position to selectively form D-glycero-beta-D-manno-heptose-1,7-bisphosphate. In terms of biological role, catalyzes the ADP transfer from ATP to D-glycero-beta-D-manno-heptose 1-phosphate, yielding ADP-D-glycero-beta-D-manno-heptose. This Salmonella paratyphi A (strain ATCC 9150 / SARB42) protein is Bifunctional protein HldE.